The primary structure comprises 456 residues: Probable galactarate/D-glucarate transporter GudP (456 aa).

A run of 10 helical transmembrane segments spans residues 11–31 (YLILLMLFLVTTINYADRATI), 51–71 (YIFSAFGWAYVLGQIPGGWLL), 78–96 (KVYAGSIFTWSLFTLLQGY), 102–119 (ISTAVVLLFLLRFMVGLA), 246–266 (IYLGQFCINALTYFFLTWFPV), 280–300 (GIIASLPAICGFLGGVLGGVI), 317–337 (TPIVCGMVLSMSMIICNYVDA), 341–361 (VVCFMALAFFGKAIGALGWAV), 381–401 (FGNLSSISTPIIIGYIIAATG), and 408–428 (SSWVPTHSFAAISYLFIVGEI).

It belongs to the major facilitator superfamily. Phthalate permease family.

The protein resides in the cell inner membrane. It carries out the reaction galactarate(in) + H(+)(in) = galactarate(out) + H(+)(out). The enzyme catalyses D-glucarate(in) + H(+)(in) = D-glucarate(out) + H(+)(out). Its function is as follows. Probably involved in the uptake of galactarate and/or D-glucarate. The protein is Probable galactarate/D-glucarate transporter GudP (gudP) of Pseudomonas putida (Arthrobacter siderocapsulatus).